Here is a 394-residue protein sequence, read N- to C-terminus: Potassium channel subfamily K member 18 (394 aa).

Residues 1–31 are Cytoplasmic-facing; it reads MEAEEPPEARRCCPEALGKARGCCPEALGKL. Residues 32-52 traverse the membrane as a helical segment; that stretch reads LPGLCFLCCLVTYALVGAALF. N-linked (GlcNAc...) asparagine glycosylation is present at asparagine 83. Positions 114–140 form an intramembrane region, pore-forming; the sequence is FLSALFFCCTVFSTVGYGHMYPVTRLG. Positions 127, 128, 129, and 130 each coordinate K(+). Residues 127–132 form a selectivity filter 1 region; sequence TVGYGH. Residues 142–162 form a helical membrane-spanning segment; sequence FLCMLYALFGIPLMFLVLTDI. Over 163 to 292 the chain is Cytoplasmic; that stretch reads GDILATILSR…EVGQQVERLD (130 aa). The segment at 210–215 is interaction with calcineurin; it reads PQIVID. An interaction with YWHAH region spans residues 261–266; that stretch reads RSNSCP. 2 positions are modified to phosphoserine: serine 264 and serine 276. A helical membrane pass occupies residues 293–313; it reads IPLPVIALVVFAYISCAAAIL. Positions 326-340 form an intramembrane region, pore-forming; that stretch reads FYFCFVTLTTIGFGD. Positions 335 to 340 are selectivity filter 2; the sequence is TIGFGD. Residues 347–367 traverse the membrane as a helical segment; the sequence is HFFLFFSIYIIVGMEILFIAF. The Cytoplasmic portion of the chain corresponds to 368 to 394; sequence KLMQNRLLHTYKTLMLFVCQREVSLPW.

It belongs to the two pore domain potassium channel (TC 1.A.1.8) family. In terms of assembly, homodimer. Heterodimer with KCNK2. Heterodimer with KCNK10. Interacts with calcineurin. Interacts with YWHAH, in a phosphorylation-dependent manner. In terms of processing, phosphorylation of Ser-264 is required for the binding of 14-3-3eta/YWHAH. Calcineurin-mediated dephosphorylation of Ser-276 enhances channel activity. Post-translationally, N-glycosylated. Detected in brain cortex, cerebellum, dorsal root ganglion, spinal cord and testis. High expression in trigeminal ganglion (at protein level), also expressed in autonomic nervous system ganglia such as the stellate ganglion and paravertebral sympathetic ganglia. Expressed in all adult spinal cord and brain regions, with slightly higher expression in thalamus, hypothalamus, hippocampus and posterior corte (at protein level). In non-neuronal tissues, substantial expression found in lung and heart and weal expression in liver, testis, kidney, small intestine and spleen. Expressed in regulatory T cells (at protein level).

It is found in the cell membrane. It carries out the reaction K(+)(in) = K(+)(out). With respect to regulation, activated upon cell stimulation via Ca(2+)-mobilizing receptors, such as CHRM1/M1 muscarinic receptor and AGTR1/AT1a angiotensin receptor. Activated by volatile anesthetics, such as isoflurane and inhibited by local anesthetics such as bupivacaine and lidocaine. Inhibited by extracellular acidic pH. Inhibited by Zn(2+) ions. Inhibited by hydroxy-alpha-sanshool, an ingredient of Schezuan pepper. Inhibited by Ba(2+) ions. Functionally, k(+) channel that conducts outward and inward rectifying currents at depolarized and hyperpolarized membrane potentials, respectively. The outward rectifying currents are voltage-dependent, coupled to K(+) electrochemical gradient across the membrane, whereas the inward currents can be induced in response to activation of Ca(2+)-mobilizing receptors. Homo- and heterodimerizes to form functional channels with distinct regulatory and gating properties. In trigeminal ganglia sensory neurons, the heterodimers of KCNK18/TRESK and KCNK2/TREK-1 or KCNK10/TREK-2 inhibit neuronal firing and neurogenic inflammation by stabilizing the resting membrane potential at K(+) equilibrium potential as well as by regulating the threshold of action potentials and the spike frequency. In thymocytes, conducts K(+) currents upon T cell receptor (TCR) signaling leading to sustained Ca(2+) influx and NF-kappa-B activation, FOXP3 transcription and positive selection of regulatory T cell (Treg) progenitor subsets. Appears to mediate the analgesics effects of hydroxy-alpha-sanshool, a metabolite naturally present in Schezuan pepper and other Xanthoxylum plants. In Mus musculus (Mouse), this protein is Potassium channel subfamily K member 18.